Here is a 649-residue protein sequence, read N- to C-terminus: Centrosomal protein of 63 kDa-A (649 aa).

2 coiled-coil regions span residues 19 to 185 (DSCE…YQHQ) and 222 to 556 (EEEL…DAAS). Ser560 bears the Phosphoserine; by atm and atr mark. Positions 612–645 (FLQEEEQRSHELLQRLNAHIEELKQESQRTVEHF) form a coiled coil.

This sequence belongs to the CEP63 family. Phosphorylation at Ser-560 by atm and atr promotes its delocalization from the centrosome and impairs its ability to promote centrosome dependent spindle assembly.

It localises to the cytoplasm. The protein resides in the cytoskeleton. The protein localises to the microtubule organizing center. Its subcellular location is the centrosome. It is found in the centriole. In terms of biological role, required for normal spindle assembly. Plays a key role in mother-centriole-dependent centriole duplication. Plays a role in DNA damage response. Following DNA damage, such as double-strand breaks (DSBs), is removed from centrosomes; this leads to the inactivation of spindle assembly and delay in mitotic progression. The chain is Centrosomal protein of 63 kDa-A (cep63-a) from Xenopus laevis (African clawed frog).